Reading from the N-terminus, the 236-residue chain is Small ribosomal subunit protein uS2c (236 aa).

This sequence belongs to the universal ribosomal protein uS2 family.

Its subcellular location is the plastid. The sequence is that of Small ribosomal subunit protein uS2c (rps2) from Cuscuta obtusiflora (Peruvian dodder).